The primary structure comprises 505 residues: Lysine--tRNA ligase (505 aa).

Residues Glu-415 and Glu-422 each contribute to the Mg(2+) site.

Belongs to the class-II aminoacyl-tRNA synthetase family. As to quaternary structure, homodimer. Requires Mg(2+) as cofactor.

It is found in the cytoplasm. It carries out the reaction tRNA(Lys) + L-lysine + ATP = L-lysyl-tRNA(Lys) + AMP + diphosphate. The polypeptide is Lysine--tRNA ligase (Xanthomonas campestris pv. campestris (strain 8004)).